Here is a 313-residue protein sequence, read N- to C-terminus: Ribosomal RNA small subunit methyltransferase H (313 aa).

S-adenosyl-L-methionine contacts are provided by residues 35-37 (GGH), D55, F79, D101, and Q108.

It belongs to the methyltransferase superfamily. RsmH family.

It localises to the cytoplasm. The enzyme catalyses cytidine(1402) in 16S rRNA + S-adenosyl-L-methionine = N(4)-methylcytidine(1402) in 16S rRNA + S-adenosyl-L-homocysteine + H(+). Its function is as follows. Specifically methylates the N4 position of cytidine in position 1402 (C1402) of 16S rRNA. The sequence is that of Ribosomal RNA small subunit methyltransferase H from Edwardsiella ictaluri (strain 93-146).